The chain runs to 283 residues: MKQYLDLCQRIVEQGKWVENERTGKRCLTVINADLTYDVAKGEFPLVTTRKSFWKAAIAELLGYIRGYDNAADFRQLGTKSWDANANENAAWLTNPHRKGEDDMGLVYGAVGRNFPKVGGGSVDLLRQIVDDLKRGVDNRGEIYTFYHPGAFHMGCLRPCLHSHHFSLLDGTLYLNSTQRSADVPLGLNWNMIQCYTFLALMAQITGHQAGQAFHKIVNAHIYEDQLELMRDVQLKRTPFKAPTLKINPDIKSLEDLETWVTLADFEVEGYEYHPSIQYPFSV.

R22 provides a ligand contact to dUMP. C160 acts as the Nucleophile in catalysis. DUMP is bound by residues 180-183, N191, and 221-223; these read RSAD and HIY. D183 is a (6R)-5,10-methylene-5,6,7,8-tetrahydrofolate binding site. Residue S282 participates in (6R)-5,10-methylene-5,6,7,8-tetrahydrofolate binding.

The protein belongs to the thymidylate synthase family. Bacterial-type ThyA subfamily. In terms of assembly, homodimer.

Its subcellular location is the cytoplasm. The enzyme catalyses dUMP + (6R)-5,10-methylene-5,6,7,8-tetrahydrofolate = 7,8-dihydrofolate + dTMP. It functions in the pathway pyrimidine metabolism; dTTP biosynthesis. In terms of biological role, catalyzes the reductive methylation of 2'-deoxyuridine-5'-monophosphate (dUMP) to 2'-deoxythymidine-5'-monophosphate (dTMP) while utilizing 5,10-methylenetetrahydrofolate (mTHF) as the methyl donor and reductant in the reaction, yielding dihydrofolate (DHF) as a by-product. This enzymatic reaction provides an intracellular de novo source of dTMP, an essential precursor for DNA biosynthesis. This Glaesserella parasuis serovar 5 (strain SH0165) (Haemophilus parasuis) protein is Thymidylate synthase.